We begin with the raw amino-acid sequence, 38 residues long: Photosystem I reaction center subunit IX (38 aa).

A helical membrane pass occupies residues 6–26 (YLSTAPVVATLWLFLTAGILI).

This sequence belongs to the PsaJ family.

The protein resides in the plastid. It localises to the chloroplast thylakoid membrane. May help in the organization of the PsaE and PsaF subunits. The protein is Photosystem I reaction center subunit IX of Cyanidioschyzon merolae (strain NIES-3377 / 10D) (Unicellular red alga).